The primary structure comprises 351 residues: GTPase Obg (351 aa).

Positions 1–159 (MKFLDQAKVY…RWIWLRLKLI (159 aa)) constitute an Obg domain. Residues 160-328 (ADVGLVGLPN…LCGSAWDIVL (169 aa)) form the OBG-type G domain. GTP-binding positions include 166-173 (GLPNAGKS), 191-195 (FTTLY), 213-216 (DIPG), 280-283 (NKID), and 309-311 (SGV). Positions 173 and 193 each coordinate Mg(2+).

This sequence belongs to the TRAFAC class OBG-HflX-like GTPase superfamily. OBG GTPase family. In terms of assembly, monomer. Requires Mg(2+) as cofactor.

It localises to the cytoplasm. Functionally, an essential GTPase which binds GTP, GDP and possibly (p)ppGpp with moderate affinity, with high nucleotide exchange rates and a fairly low GTP hydrolysis rate. Plays a role in control of the cell cycle, stress response, ribosome biogenesis and in those bacteria that undergo differentiation, in morphogenesis control. In Maricaulis maris (strain MCS10) (Caulobacter maris), this protein is GTPase Obg.